A 361-amino-acid chain; its full sequence is Histidinol-phosphate aminotransferase (361 aa).

Lysine 218 carries the post-translational modification N6-(pyridoxal phosphate)lysine.

The protein belongs to the class-II pyridoxal-phosphate-dependent aminotransferase family. Histidinol-phosphate aminotransferase subfamily. Homodimer. The cofactor is pyridoxal 5'-phosphate.

It carries out the reaction L-histidinol phosphate + 2-oxoglutarate = 3-(imidazol-4-yl)-2-oxopropyl phosphate + L-glutamate. It participates in amino-acid biosynthesis; L-histidine biosynthesis; L-histidine from 5-phospho-alpha-D-ribose 1-diphosphate: step 7/9. This Ruegeria pomeroyi (strain ATCC 700808 / DSM 15171 / DSS-3) (Silicibacter pomeroyi) protein is Histidinol-phosphate aminotransferase.